The chain runs to 505 residues: Lysine--tRNA ligase (505 aa).

Residues E415 and E422 each coordinate Mg(2+).

This sequence belongs to the class-II aminoacyl-tRNA synthetase family. As to quaternary structure, homodimer. Requires Mg(2+) as cofactor.

The protein localises to the cytoplasm. It catalyses the reaction tRNA(Lys) + L-lysine + ATP = L-lysyl-tRNA(Lys) + AMP + diphosphate. This is Lysine--tRNA ligase from Shigella boydii serotype 4 (strain Sb227).